The primary structure comprises 1254 residues: Protein transport protein Sec31A (1254 aa).

7 WD repeats span residues 4–47 (KEIN…EIFE), 64–111 (SSPH…AGDS), 120–160 (KHTG…SPMT), 166–206 (QPQE…LIIK), 209–254 (DHSN…SPLK), 258–298 (NHTR…VLYE), and 301–341 (TSTQ…NDNA). The span at 364–383 (TLPPLQLPQQTSPQSTITPL) shows a compositional bias: low complexity. The segment at 364-386 (TLPPLQLPQQTSPQSTITPLKKP) is disordered. One copy of the WD 8; interaction with SEC13 repeat lies at 397-428 (SFAFGGKLVTLDNIKPTAQQPQQTAAHVVHIS). Disordered stretches follow at residues 818–892 (PMQT…QSPA), 983–1008 (CFQH…GTQH), and 1058–1125 (PPAP…PGAP). Residues 832-846 (AQPAAPAVPPQYYQQ) are compositionally biased toward low complexity. Composition is skewed to polar residues over residues 847–863 (GRSA…TPTA) and 872–881 (VPSSDPQGDS). A compositionally biased stretch (low complexity) spans 1080-1091 (QTLQPQQQVPDQ).

Belongs to the WD repeat SEC31 family. As to quaternary structure, COPII is composed of at least 5 proteins: the SEC23/24 complex, the SEC13/31 complex and SAR1. SEC13 and SEC31 make a 2:2 tetramer that forms the edge element of the COPII outer coat. The tetramer self-assembles in multiple copies to form the complete polyhedral cage. Interacts (via WD 8) with SEC13.

Its subcellular location is the cytoplasm. The protein resides in the cytoplasmic vesicle. The protein localises to the COPII-coated vesicle membrane. It is found in the endoplasmic reticulum membrane. Functionally, component of the coat protein complex II (COPII) which promotes the formation of transport vesicles from the endoplasmic reticulum (ER). The coat has two main functions, the physical deformation of the endoplasmic reticulum membrane into vesicles and the selection of cargo molecules. This chain is Protein transport protein Sec31A (sec31a), found in Danio rerio (Zebrafish).